Reading from the N-terminus, the 410-residue chain is MSRSLSIIWLFGLISGFNIMITGNTLNYWLAKENIALQTIGLLSLITLPYSINFLFAPIFDSLKIKYLDKIFGHRLSWICLTSIALVFFVYILSFLNPFDNLLLFASISLIISFFSSMQDTILSAFRTEIVNKESLGFASGIYIFGYRFGMLLANSGAIYLSIYLTFNEIYKIFAILIFIYLILLIVGVKYCRFDQNNDIEQTTNNNDDIFAFIKNILKPIGSISFIILILIFLILYRLPDNFINVMINPFLLHLNYDAFEIASVGKFWGVMGAIVGGLLGGFIMKKKNILDSILLFGIIHALAHILFIILKIHGKNSTLLFITIGAESITGGMTMTAYIAFISSLCQGKFRATQYSFFSSMMGISRSIFPIISGYIVVNFGWQNFFLFTTIITIPSLLVLLKIKNKLQQ.

12 helical membrane-spanning segments follow: residues leucine 5–threonine 25, isoleucine 40–phenylalanine 60, leucine 76–leucine 96, proline 98–methionine 118, glycine 141–leucine 161, glutamate 169–valine 189, isoleucine 217–tyrosine 237, valine 265–methionine 285, isoleucine 290–isoleucine 310, leucine 320–isoleucine 340, tyrosine 356–valine 378, and tryptophan 383–leucine 402.

The protein belongs to the major facilitator superfamily.

The protein localises to the cell inner membrane. The sequence is that of Putative transporter AmpG 1 (ampG1) from Rickettsia bellii (strain RML369-C).